A 436-amino-acid polypeptide reads, in one-letter code: uncharacterized protein (436 aa).

Positions 1-20 (MKCAVAILLVCLTLQQAAYG) are cleaved as a signal peptide. Coiled-coil stretches lie at residues 25-87 (EEVK…ALRN), 154-207 (MRKT…NSVE), and 247-329 (ESWG…ASLL). A compositionally biased stretch (acidic residues) spans 371 to 390 (EEEIAPSTEEDGSEELEADS). The interval 371-419 (EEEIAPSTEEDGSEELEADSYDSKVGGESPISQRTEERQGAEERSRLRR) is disordered. The segment covering 404–415 (RTEERQGAEERS) has biased composition (basic and acidic residues).

Component of the acid-insoluble organic matrix of the aragonitic skeleton (at protein level).

The protein localises to the secreted. This is an uncharacterized protein from Acropora millepora (Staghorn coral).